The primary structure comprises 131 residues: Methylated-DNA--protein-cysteine methyltransferase (131 aa).

Cys-98 functions as the Nucleophile; methyl group acceptor in the catalytic mechanism.

Belongs to the MGMT family.

The protein resides in the cytoplasm. It carries out the reaction a 6-O-methyl-2'-deoxyguanosine in DNA + L-cysteinyl-[protein] = S-methyl-L-cysteinyl-[protein] + a 2'-deoxyguanosine in DNA. The catalysed reaction is a 4-O-methyl-thymidine in DNA + L-cysteinyl-[protein] = a thymidine in DNA + S-methyl-L-cysteinyl-[protein]. Its function is as follows. Involved in the cellular defense against the biological effects of O6-methylguanine (O6-MeG) and O4-methylthymine (O4-MeT) in DNA. Repairs the methylated nucleobase in DNA by stoichiometrically transferring the methyl group to a cysteine residue in the enzyme. This is a suicide reaction: the enzyme is irreversibly inactivated. This is Methylated-DNA--protein-cysteine methyltransferase (ogt) from Methanopyrus kandleri (strain AV19 / DSM 6324 / JCM 9639 / NBRC 100938).